The chain runs to 1490 residues: ABC transporter CDR4 (1490 aa).

Positions 1 to 12 are enriched in polar residues; it reads MADADTSSNSSK. Disordered regions lie at residues 1–26 and 53–75; these read MADA…GTYQ and LKRQ…LSGK. Residues 1-516 lie on the Cytoplasmic side of the membrane; that stretch reads MADADTSSNS…NILRIKGNPS (516 aa). Positions 58 to 67 are enriched in basic and acidic residues; that stretch reads SRQESQKSNE. One can recognise an ABC transporter 1 domain in the interval 151-407; that stretch reads PKYLSLFFRE…FIDMGYECPQ (257 aa). 6 consecutive transmembrane segments (helical) span residues 517-537, 551-571, 601-621, 626-646, 659-679, and 767-787; these read IHLF…SIFY, AALF…IFSL, LPTK…MVNF, GNFF…SHIF, AMTP…FVIP, and FGIV…LCEI. Topologically, residues 788–1182 are cytoplasmic; the sequence is NKGAMQKGEI…VFEQNWRTPS (395 aa). Residues 846–1090 enclose the ABC transporter 2 domain; that stretch reads FFWRDLTYQV…LINYFEKYGA (245 aa). 882–889 is an ATP binding site; sequence GASGAGKT. A run of 3 helical transmembrane segments spans residues 1183–1203, 1217–1237, and 1268–1288; these read YLYS…FSFY, FSVF…LPTF, and IPWN…PVGL. Asn1291 carries N-linked (GlcNAc...) asparagine glycosylation. Helical transmembrane passes span 1304–1324, 1333–1353, and 1370–1390; these read FMWF…QLCI, AANL…VLVT, and FTYL…VTCA. An N-linked (GlcNAc...) asparagine glycan is attached at Asn1424. Residues 1455–1475 form a helical membrane-spanning segment; the sequence is IGIYIAFIGINIIGTFILYWF.

This sequence belongs to the ABC transporter superfamily. ABCG family. PDR (TC 3.A.1.205) subfamily.

It localises to the membrane. The protein is ABC transporter CDR4 (CDR4) of Candida albicans (Yeast).